A 66-amino-acid polypeptide reads, in one-letter code: Large ribosomal subunit protein uL29 (66 aa).

Belongs to the universal ribosomal protein uL29 family.

This Thermotoga neapolitana (strain ATCC 49049 / DSM 4359 / NBRC 107923 / NS-E) protein is Large ribosomal subunit protein uL29.